The sequence spans 774 residues: Formin-like protein 13 (774 aa).

A signal peptide spans 1–22; that stretch reads MRRRVALSTAIALLVGAQLCVA. Positions 51 to 67 are enriched in pro residues; sequence PPPPMSGSEAVPPPPPA. The segment at 51–78 is disordered; it reads PPPPMSGSEAVPPPPPAAAASATTGGGR. Residues 68–78 show a composition bias toward low complexity; that stretch reads AAASATTGGGR. Residues 89-109 form a helical membrane-spanning segment; the sequence is IALSAGLVALAVASYSCCLLL. Disordered regions lie at residues 130–163, 176–338, 374–402, and 740–774; these read AAAA…DAIY, HEKS…HLKP, FLNS…RRLL, and GSGK…SSSS. The segment covering 194 to 216 has biased composition (pro residues); sequence DLRPLPPLKRPESQPPPPPPSTP. Low complexity predominate over residues 242–261; sequence SSFSRSTSQHSTLEQTAMPP. Pro residues predominate over residues 262–286; it reads MAAPAPPQTNPPRPVRPPPPPPPPR. The FH2 domain maps to 326-749; that stretch reads GAARPPKPPH…GSGKSFRVPA (424 aa).

This sequence belongs to the formin-like family. Class-I subfamily.

The protein resides in the membrane. The chain is Formin-like protein 13 (FH13) from Oryza sativa subsp. japonica (Rice).